We begin with the raw amino-acid sequence, 95 residues long: Aspartyl/glutamyl-tRNA(Asn/Gln) amidotransferase subunit C (95 aa).

Belongs to the GatC family. As to quaternary structure, heterotrimer of A, B and C subunits.

It carries out the reaction L-glutamyl-tRNA(Gln) + L-glutamine + ATP + H2O = L-glutaminyl-tRNA(Gln) + L-glutamate + ADP + phosphate + H(+). It catalyses the reaction L-aspartyl-tRNA(Asn) + L-glutamine + ATP + H2O = L-asparaginyl-tRNA(Asn) + L-glutamate + ADP + phosphate + 2 H(+). In terms of biological role, allows the formation of correctly charged Asn-tRNA(Asn) or Gln-tRNA(Gln) through the transamidation of misacylated Asp-tRNA(Asn) or Glu-tRNA(Gln) in organisms which lack either or both of asparaginyl-tRNA or glutaminyl-tRNA synthetases. The reaction takes place in the presence of glutamine and ATP through an activated phospho-Asp-tRNA(Asn) or phospho-Glu-tRNA(Gln). The sequence is that of Aspartyl/glutamyl-tRNA(Asn/Gln) amidotransferase subunit C from Hydrogenovibrio crunogenus (strain DSM 25203 / XCL-2) (Thiomicrospira crunogena).